Consider the following 89-residue polypeptide: Small ribosomal subunit protein uS15 (89 aa).

The protein belongs to the universal ribosomal protein uS15 family. As to quaternary structure, part of the 30S ribosomal subunit. Forms a bridge to the 50S subunit in the 70S ribosome, contacting the 23S rRNA.

In terms of biological role, one of the primary rRNA binding proteins, it binds directly to 16S rRNA where it helps nucleate assembly of the platform of the 30S subunit by binding and bridging several RNA helices of the 16S rRNA. Forms an intersubunit bridge (bridge B4) with the 23S rRNA of the 50S subunit in the ribosome. The sequence is that of Small ribosomal subunit protein uS15 from Corynebacterium kroppenstedtii (strain DSM 44385 / JCM 11950 / CIP 105744 / CCUG 35717).